The following is a 129-amino-acid chain: Phosphoribosyl-AMP cyclohydrolase (129 aa).

Asp85 lines the Mg(2+) pocket. Residue Cys86 participates in Zn(2+) binding. Residues Asp87 and Asp89 each coordinate Mg(2+). Zn(2+) contacts are provided by Cys102 and Cys109.

This sequence belongs to the PRA-CH family. Homodimer. It depends on Mg(2+) as a cofactor. Zn(2+) serves as cofactor.

It localises to the cytoplasm. The catalysed reaction is 1-(5-phospho-beta-D-ribosyl)-5'-AMP + H2O = 1-(5-phospho-beta-D-ribosyl)-5-[(5-phospho-beta-D-ribosylamino)methylideneamino]imidazole-4-carboxamide. Its pathway is amino-acid biosynthesis; L-histidine biosynthesis; L-histidine from 5-phospho-alpha-D-ribose 1-diphosphate: step 3/9. Functionally, catalyzes the hydrolysis of the adenine ring of phosphoribosyl-AMP. This Methanococcus maripaludis (strain C7 / ATCC BAA-1331) protein is Phosphoribosyl-AMP cyclohydrolase.